A 494-amino-acid chain; its full sequence is DnaJ homolog subfamily C member 7 (494 aa).

An N-acetylalanine modification is found at alanine 2. 8 TPR repeats span residues 28 to 61 (AESFKEQGNAYYAKKDYNEAYNYYTKAIDMCPNN), 62 to 95 (ASYYGNRAATLMMLGRFREALGDAQQSVRLDDSF), 96 to 129 (VRGHLREGKCHLSLGNAMAACRSFQRALELDHKN), 142 to 175 (VMEYEKIAEVDFEKRDFRKVVFCMDRALEFAPAC), 210 to 243 (ADALYVRGLCLYYEDCIEKAVQFFVQALRMAPDH), 256 to 289 (LKAKKEDGNKAFKEGNYKLAYELYTEALGIDPNN), 294 to 327 (AKLYCNRGTVNSKLRQLEDAIEDCTNAVKLDDTY), and 328 to 361 (IKAYLRRAQCYMDTEQFEEAVRDYEKVYQTEKTK). The J domain occupies 381–451 (DYYKILGVDK…KKKTRYDSGQ (71 aa)). A Phosphoserine modification is found at serine 393.

As to quaternary structure, associates with complexes containing chaperones HSP70 and HSP90. Interacts with the GAP domain of NF1. Interacts with HSP90AA1. Interacts with HSPA1A/B; the interaction is enhanced by ATP. Interacts with HSP90AB1. Interacts with PGR. Interacts with RAD9A; the interaction is interrupted by UV and heat shock treatments. Interacts with HUS1 and RAD1. Interacts with NR1I3; this complex may also include HSP90 Interacts with HSPA8. In terms of tissue distribution, widely expressed with high levels in liver, skeletal muscle, kidney and testis.

Its subcellular location is the cytoplasm. It is found in the nucleus. The protein localises to the cytoskeleton. Acts as a co-chaperone regulating the molecular chaperones HSP70 and HSP90 in folding of steroid receptors, such as the glucocorticoid receptor and the progesterone receptor. Proposed to act as a recycling chaperone by facilitating the return of chaperone substrates to early stages of chaperoning if further folding is required. In vitro, induces ATP-independent dissociation of HSP90 but not of HSP70 from the chaperone-substrate complexes. Recruits NR1I3 to the cytoplasm. This Mus musculus (Mouse) protein is DnaJ homolog subfamily C member 7 (Dnajc7).